We begin with the raw amino-acid sequence, 186 residues long: Peptide deformylase (186 aa).

Positions 113 and 156 each coordinate Fe cation. E157 is an active-site residue. H160 is a binding site for Fe cation.

It belongs to the polypeptide deformylase family. Fe(2+) is required as a cofactor.

The catalysed reaction is N-terminal N-formyl-L-methionyl-[peptide] + H2O = N-terminal L-methionyl-[peptide] + formate. In terms of biological role, removes the formyl group from the N-terminal Met of newly synthesized proteins. Requires at least a dipeptide for an efficient rate of reaction. N-terminal L-methionine is a prerequisite for activity but the enzyme has broad specificity at other positions. The sequence is that of Peptide deformylase from Levilactobacillus brevis (strain ATCC 367 / BCRC 12310 / CIP 105137 / JCM 1170 / LMG 11437 / NCIMB 947 / NCTC 947) (Lactobacillus brevis).